Here is a 60-residue protein sequence, read N- to C-terminus: Large ribosomal subunit protein bL32 (60 aa).

A disordered region spans residues 1–23 (MAVPRNRHSNARKNIRRSHHAKQ).

Belongs to the bacterial ribosomal protein bL32 family.

This is Large ribosomal subunit protein bL32 from Chlamydia abortus (strain DSM 27085 / S26/3) (Chlamydophila abortus).